We begin with the raw amino-acid sequence, 400 residues long: Imidazolonepropionase (400 aa).

2 residues coordinate Fe(3+): His70 and His72. Zn(2+) is bound by residues His70 and His72. 4-imidazolone-5-propanoate is bound by residues Arg79, Tyr142, and His175. An N-formimidoyl-L-glutamate-binding site is contributed by Tyr142. His239 provides a ligand contact to Fe(3+). His239 contributes to the Zn(2+) binding site. Residue Gln242 participates in 4-imidazolone-5-propanoate binding. Asp314 serves as a coordination point for Fe(3+). Residue Asp314 coordinates Zn(2+). Positions 316 and 318 each coordinate N-formimidoyl-L-glutamate. Thr319 serves as a coordination point for 4-imidazolone-5-propanoate.

The protein belongs to the metallo-dependent hydrolases superfamily. HutI family. Zn(2+) is required as a cofactor. Fe(3+) serves as cofactor.

Its subcellular location is the cytoplasm. It catalyses the reaction 4-imidazolone-5-propanoate + H2O = N-formimidoyl-L-glutamate. Its pathway is amino-acid degradation; L-histidine degradation into L-glutamate; N-formimidoyl-L-glutamate from L-histidine: step 3/3. Functionally, catalyzes the hydrolytic cleavage of the carbon-nitrogen bond in imidazolone-5-propanoate to yield N-formimidoyl-L-glutamate. It is the third step in the universal histidine degradation pathway. This Methylobacterium nodulans (strain LMG 21967 / CNCM I-2342 / ORS 2060) protein is Imidazolonepropionase.